The primary structure comprises 107 residues: Virulence factor PGA16 (107 aa).

A signal peptide spans 1-18; that stretch reads MRVFQIVYILIISNLIYA. Positions 26-56 are disordered; that stretch reads SHHHKNDNNIADNTNNNNNNNNNNNNNNITN. Low complexity predominate over residues 33-56; the sequence is NNIADNTNNNNNNNNNNNNNNITN. N-linked (GlcNAc...) asparagine glycosylation is found at N53 and N56. G76 carries GPI-anchor amidated glycine lipidation. Positions 77–107 are cleaved as a propeptide — removed in mature form; it reads VAAMGGILGQNGWFYGDAGLMAAIFGAMLLL.

The protein localises to the cell membrane. Cell surface GPI-anchored protein required for virulence. Mediates hyphal ramification which is important for the interaction with host cells. The sequence is that of Virulence factor PGA16 (PGA16) from Candida albicans (strain SC5314 / ATCC MYA-2876) (Yeast).